Consider the following 692-residue polypeptide: Pentatricopeptide repeat-containing protein At2g04860 (692 aa).

17 PPR repeats span residues 12 to 46, 47 to 83, 84 to 114, 115 to 149, 150 to 184, 185 to 215, 216 to 250, 280 to 314, 316 to 345, 346 to 380, 381 to 411, 412 to 447, 448 to 482, 483 to 513, 514 to 548, 549 to 584, and 585 to 615; these read DLSY…SLTP, NHFT…GLDR, FVYV…MPER, DTVV…GFSP, SATT…GLEL, DSQV…MKDK, STVS…NVEI, DISV…SIVG, TSIV…CMKI, DAVA…GLCT, KTLV…LQET, PLIS…GLLP, DAIT…NFEN, ENFV…IKAP, CTAT…GLKP, DEIT…GISP, and TLQH…MDIK. The type E motif; degenerate stretch occupies residues 620 to 692; it reads VWGALLSACI…YDGYLGVSQI (73 aa).

Belongs to the PPR family. PCMP-E subfamily.

This Arabidopsis thaliana (Mouse-ear cress) protein is Pentatricopeptide repeat-containing protein At2g04860 (PCMP-E74).